A 123-amino-acid chain; its full sequence is Large ribosomal subunit protein uL24 (123 aa).

The protein belongs to the universal ribosomal protein uL24 family. As to quaternary structure, part of the 50S ribosomal subunit.

Its function is as follows. One of two assembly initiator proteins, it binds directly to the 5'-end of the 23S rRNA, where it nucleates assembly of the 50S subunit. In terms of biological role, located at the polypeptide exit tunnel on the outside of the subunit. The sequence is that of Large ribosomal subunit protein uL24 from Pyrobaculum aerophilum (strain ATCC 51768 / DSM 7523 / JCM 9630 / CIP 104966 / NBRC 100827 / IM2).